We begin with the raw amino-acid sequence, 60 residues long: Metallothionein B (60 aa).

Positions 1–28 are beta; sequence MDPCECTKSGTCNCGGSCTCTNCSCTSC. Residues cysteine 4, cysteine 6, cysteine 12, cysteine 14, cysteine 18, cysteine 20, cysteine 23, cysteine 25, cysteine 28, cysteine 32, cysteine 33, cysteine 35, cysteine 36, cysteine 40, cysteine 43, cysteine 47, cysteine 49, cysteine 54, cysteine 58, and cysteine 59 each contribute to the a divalent metal cation site. Residues 29-60 form an alpha region; it reads KKSCCPCCPSGCTKCASGCVCKGKTCDTSCCQ.

This sequence belongs to the metallothionein superfamily. Type 1 family.

Its function is as follows. Metallothioneins have a high content of cysteine residues that bind various heavy metals. The polypeptide is Metallothionein B (mtb) (Chaenocephalus aceratus (Blackfin icefish)).